Here is a 201-residue protein sequence, read N- to C-terminus: FMN-dependent NADH:quinone oxidoreductase (201 aa).

FMN-binding positions include Ser10, 16–18, 96–99, and 140–143; these read SQS, MYNF, and SRGG.

This sequence belongs to the azoreductase type 1 family. As to quaternary structure, homodimer. FMN serves as cofactor.

It carries out the reaction 2 a quinone + NADH + H(+) = 2 a 1,4-benzosemiquinone + NAD(+). The enzyme catalyses N,N-dimethyl-1,4-phenylenediamine + anthranilate + 2 NAD(+) = 2-(4-dimethylaminophenyl)diazenylbenzoate + 2 NADH + 2 H(+). In terms of biological role, quinone reductase that provides resistance to thiol-specific stress caused by electrophilic quinones. Also exhibits azoreductase activity. Catalyzes the reductive cleavage of the azo bond in aromatic azo compounds to the corresponding amines. The sequence is that of FMN-dependent NADH:quinone oxidoreductase from Escherichia coli O9:H4 (strain HS).